A 75-amino-acid polypeptide reads, in one-letter code: 8.9 kDa basic protein (75 aa).

The chain is 8.9 kDa basic protein (P8.9) from Orgyia pseudotsugata (Douglas-fir tussock moth).